The chain runs to 214 residues: MGVMGGTFDPIHYGHLVAASEVADLFDLDEVVFVPSGQPWQKGRQVSAAEHRYLMTVIATASNPRFSVSRVDIDRGGPTYTKDTLADLHALHPDSELYFTTGADALASIMSWQGWEELFELARFVGVSRPGYELRNEHITSLLGQLAKDALTLVEIPALAISSTDCRQRAEQSRPLWYLMPDGVVQYVSKCRLYCGACDAGARSTTSLAAGNGL.

The protein belongs to the NadD family.

The enzyme catalyses nicotinate beta-D-ribonucleotide + ATP + H(+) = deamido-NAD(+) + diphosphate. Its pathway is cofactor biosynthesis; NAD(+) biosynthesis; deamido-NAD(+) from nicotinate D-ribonucleotide: step 1/1. In terms of biological role, catalyzes the reversible adenylation of nicotinate mononucleotide (NaMN) to nicotinic acid adenine dinucleotide (NaAD). This is Probable nicotinate-nucleotide adenylyltransferase from Mycobacterium tuberculosis (strain ATCC 25177 / H37Ra).